The primary structure comprises 54 residues: uncharacterized protein (54 aa).

This is an uncharacterized protein from Dictyostelium discoideum (Social amoeba).